Consider the following 223-residue polypeptide: Uracil-DNA glycosylase (223 aa).

Asp-67 serves as the catalytic Proton acceptor.

Belongs to the uracil-DNA glycosylase (UDG) superfamily. UNG family.

It localises to the cytoplasm. It catalyses the reaction Hydrolyzes single-stranded DNA or mismatched double-stranded DNA and polynucleotides, releasing free uracil.. Functionally, excises uracil residues from the DNA which can arise as a result of misincorporation of dUMP residues by DNA polymerase or due to deamination of cytosine. The sequence is that of Uracil-DNA glycosylase from Borrelia turicatae (strain 91E135).